Here is a 233-residue protein sequence, read N- to C-terminus: Small ribosomal subunit protein uS5 (233 aa).

Composition is skewed to basic and acidic residues over residues 1–12 (MANESEIQKTEN) and 39–54 (RGRD…RNEE). The segment at 1 to 54 (MANESEIQKTENAEVANAANGTNPNNERRGRGGRGRGGRGRDGRGRRDDRRNEE) is disordered. The 64-residue stretch at 59-122 (LIEKLVHINR…AAAKKTMIRV (64 aa)) folds into the S5 DRBM domain.

The protein belongs to the universal ribosomal protein uS5 family. As to quaternary structure, part of the 30S ribosomal subunit. Contacts proteins S4 and S8.

With S4 and S12 plays an important role in translational accuracy. Its function is as follows. Located at the back of the 30S subunit body where it stabilizes the conformation of the head with respect to the body. This chain is Small ribosomal subunit protein uS5, found in Zymomonas mobilis subsp. mobilis (strain ATCC 31821 / ZM4 / CP4).